A 100-amino-acid polypeptide reads, in one-letter code: NADH-quinone oxidoreductase subunit K (100 aa).

3 helical membrane passes run 4 to 24 (LQHG…GLII), 29 to 49 (LFML…FVVV), and 60 to 80 (VMFI…LALL).

The protein belongs to the complex I subunit 4L family. In terms of assembly, NDH-1 is composed of 13 different subunits. Subunits NuoA, H, J, K, L, M, N constitute the membrane sector of the complex.

It is found in the cell inner membrane. It catalyses the reaction a quinone + NADH + 5 H(+)(in) = a quinol + NAD(+) + 4 H(+)(out). Its function is as follows. NDH-1 shuttles electrons from NADH, via FMN and iron-sulfur (Fe-S) centers, to quinones in the respiratory chain. The immediate electron acceptor for the enzyme in this species is believed to be ubiquinone. Couples the redox reaction to proton translocation (for every two electrons transferred, four hydrogen ions are translocated across the cytoplasmic membrane), and thus conserves the redox energy in a proton gradient. This is NADH-quinone oxidoreductase subunit K from Photorhabdus laumondii subsp. laumondii (strain DSM 15139 / CIP 105565 / TT01) (Photorhabdus luminescens subsp. laumondii).